A 535-amino-acid polypeptide reads, in one-letter code: Tetrathionate hydrolase (535 aa).

The N-terminal stretch at 1-39 (MNLKILVGLFILGIIILSAMTFLNFTTIVAQDKGDQQPK) is a signal peptide. A glycan (N-linked (GlcNAc...) asparagine) is linked at asparagine 50.

This sequence belongs to the tetrathionate hydrolase family. As to quaternary structure, monomer and homodimer; in equilibrium.

The protein resides in the cell surface. It carries out the reaction tetrathionate + H2O = sulfur + thiosulfate + sulfate + H(+). Its function is as follows. Catalyzes the hydrolysis of tetrathionate to generate elemental sulfur, thiosulfate and sulfate. The polypeptide is Tetrathionate hydrolase (Acidianus ambivalens (Desulfurolobus ambivalens)).